The sequence spans 513 residues: Histone acetyltransferase KAT5 (513 aa).

One can recognise a Tudor-knot domain in the interval 8-65; it reads IEGCRLPVLRRNQDNEDEWPLAEILSVKDISGRKLFYVHYIDFNKRLDEWVTHERLDL. At K52 the chain carries N6-acetyllysine. The tract at residues 69–106 is disordered; the sequence is QFPKKEAKTPTKNGLPGSRPGSPEREVPASAQASGKTL. S86 is subject to Phosphoserine. A Phosphoserine; by CDK1 and CDK9 modification is found at S90. An N6-acetyllysine; by autocatalysis mark is found at K104 and K120. Residues 122 to 217 form a disordered region; it reads REAIPGGEPD…SAPRMTGSLV (96 aa). Residues 133-144 show a composition bias toward polar residues; it reads PLSSSSCLQPNH. N6-acetyllysine; by autocatalysis occurs at positions 148, 150, 187, and 189. S199 carries the phosphoserine modification. An MYST-type HAT domain is found at 227-504; that stretch reads TRMKNIECIE…IDSKCLHFTP (278 aa). The C2HC MYST-type zinc finger occupies 260–285; the sequence is LYLCEFCLKYGRSLKCLQRHLTKCDL. K327 is subject to N6-acetyllysine; by autocatalysis. The interval 368–513 is interaction with ATF2; the sequence is ACILTLPPYQ…PKDWSKRGKW (146 aa). Acetyl-CoA-binding positions include 370–372 and 377–383; these read ILT and QRRGYGK. E403 acts as the Proton donor/acceptor in catalysis. S407 and S416 together coordinate acetyl-CoA. Residue K430 forms a Glycyl lysine isopeptide (Lys-Gly) (interchain with G-Cter in SUMO1); alternate linkage. Residue K430 forms a Glycyl lysine isopeptide (Lys-Gly) (interchain with G-Cter in SUMO2); alternate linkage. K451 is covalently cross-linked (Glycyl lysine isopeptide (Lys-Gly) (interchain with G-Cter in SUMO1)).

The protein belongs to the MYST (SAS/MOZ) family. As to quaternary structure, component of the NuA4 histone acetyltransferase complex which contains the catalytic subunit KAT5/TIP60 and the subunits EP400, TRRAP/PAF400, BRD8/SMAP, EPC1, DMAP1/DNMAP1, RUVBL1/TIP49, RUVBL2, ING3, actin, ACTL6A/BAF53A, MORF4L1/MRG15, MORF4L2/MRGX, MRGBP, YEATS4/GAS41, VPS72/YL1 and MEAF6. KAT5/TIP60, EPC1, and ING3 together constitute a minimal HAT complex termed Piccolo NuA4. The NuA4 complex interacts with MYC. Interacts with ATM. Interacts with JADE1. Interacts with PLA2G4A/CPLA2, EDNRA and HDAC7. Interacts with the cytoplasmic tail of APP and APBB1/FE65. Interacts with TRIM24 and TRIM68. Forms a complex with SENP6 and UBE2I in response to UV irradiation. Identified in a complex with HINT1. Interacts with ATF2 and CUL3. Interacts with NR1D2 (via N-terminus). Component of a SWR1-like complex. Interacts with FOXP3. Interacts with ZBTB49. Interacts with SRF. Interacts with ATF3; promoting autoacetylation and deubiquitination by USP7. Interacts with EP300/p300; interaction promotes KAT5 autoacetylation. Interacts with PRKDC; interaction is impaired following KAT5 sumoylation. Interacts with GPR50. Interacts with NME3; this interaction enables recruitment of NME3 at DNA damage sites where it plays a role in the repair of DNA. Post-translationally, phosphorylated on Ser-86 and Ser-90; enhanced during G2/M phase. The phosphorylated form has a higher activity. Phosphorylation at Ser-90 by CDK1 or CDK9 is a prerequisite for phosphorylation at Ser-86 by GSK3. Phosphorylation at Ser-86 by GSK3 (GSK3A or GSK3B) activates acetyltransferase and acyltransferase activity. Phosphorylation at Ser-90 by CDK9 promotes KAT5 recruitment to chromatin. Phosphorylation by VRK1 following DNA damage promotes KAT5 association with chromatin and histone acetyltransferase activity. Autoacetylated. Autoacetylation is required for histone acetyltransferase activity. Autoacetylation at Lys-327 is facilitated by interaction with EP300/p300: it prevents ubiquitination and subsequent degradation by the proteasome and promotes acetylation of target proteins. Deacetylated by HDAC3 and SIRT1. Deacetylation by HDAC3 promotes its ubiquitination and cytoplasmic localization. In terms of processing, sumoylated by UBE2I at Lys-430 and Lys-451, leading to increase of its histone acetyltransferase activity in UV-induced DNA damage response, as well as its translocation to nuclear bodies. Sumoylation with SUMO2 by PIAS4 at Lys-430 promotes repair of DNA double-strand breaks (DSBs) via homologous recombination (HR). Sumoylation by PIAS4 impairs interaction with PRKDC, inhibiting non-homologous end joining (NHEJ)-mediated repair of DSBs, thereby facilitating HR. Desumoylated by SENP3. Post-translationally, ubiquitinated by MDM2, leading to its proteasome-dependent degradation. Ubiquitination is prevented by autoacetylation at Lys-327. Ubiquitinated following deacetylation by HDAC3, leading to cytoplasmic localization. Deubiquitinated by USP7 following interaction with ATF3, promoting its stabilization. As to expression, expressed in testis, heart, brain, kidney and liver. Weakly expressed in lung.

The protein localises to the nucleus. The protein resides in the chromosome. Its subcellular location is the cytoplasm. It is found in the centromere. It localises to the kinetochore. The protein localises to the cytoskeleton. The protein resides in the spindle pole. Its subcellular location is the nucleolus. It is found in the perinuclear region. It catalyses the reaction L-lysyl-[histone] + acetyl-CoA = N(6)-acetyl-L-lysyl-[histone] + CoA + H(+). The catalysed reaction is L-lysyl-[protein] + acetyl-CoA = N(6)-acetyl-L-lysyl-[protein] + CoA + H(+). It carries out the reaction (2E)-butenoyl-CoA + L-lysyl-[protein] = N(6)-(2E)-butenoyl-L-lysyl-[protein] + CoA + H(+). The enzyme catalyses 2-hydroxyisobutanoyl-CoA + L-lysyl-[protein] = N(6)-(2-hydroxyisobutanoyl)-L-lysyl-[protein] + CoA + H(+). It catalyses the reaction (S)-lactoyl-CoA + L-lysyl-[protein] = N(6)-[(S)-lactoyl]-L-lysyl-[protein] + CoA + H(+). With respect to regulation, acyltransferase and acetyltransferase activities are activated by phosphorylation and autoacetylation. Autoacetylation activates the histone acetyltransferase activity. In terms of biological role, catalytic subunit of the NuA4 histone acetyltransferase complex, a multiprotein complex involved in transcriptional activation of select genes principally by acetylation of nucleosomal histones H2A and H4. Histone acetylation alters nucleosome-DNA interactions and promotes interaction of the modified histones with other proteins which positively regulate transcription. The NuA4 histone acetyltransferase complex is required for the activation of transcriptional programs associated with proto-oncogene mediated growth induction, tumor suppressor mediated growth arrest and replicative senescence, apoptosis, and DNA repair. The NuA4 complex plays a direct role in repair of DNA double-strand breaks (DSBs) by promoting homologous recombination (HR): the complex inhibits TP53BP1 binding to chromatin via MBTD1, which recognizes and binds histone H4 trimethylated at 'Lys-20' (H4K20me), and KAT5 that catalyzes acetylation of 'Lys-15' of histone H2A (H2AK15ac), thereby blocking the ubiquitination mark required for TP53BP1 localization at DNA breaks. Also involved in DSB repair by mediating acetylation of 'Lys-5' of histone H2AX (H2AXK5ac), promoting NBN/NBS1 assembly at the sites of DNA damage. The NuA4 complex plays a key role in hematopoietic stem cell maintenance and is required to maintain acetylated H2A.Z/H2AZ1 at MYC target genes. The NuA4 complex is also required for spermatid development by promoting acetylation of histones: histone hyperacetylation is required for histone replacement during the transition from round to elongating spermatids. Component of a SWR1-like complex that specifically mediates the removal of histone H2A.Z/H2AZ1 from the nucleosome. Also acetylates non-histone proteins, such as BMAL1, ATM, AURKB, CHKA, CGAS, ERCC4/XPF, LPIN1, TP53/p53, NDC80/HEC1, NR1D2, RAN, SOX4, FOXP3, SQSTM1, ULK1 and RUBCNL/Pacer. Directly acetylates and activates ATM. Promotes nucleotide excision repair (NER) by mediating acetylation of ERCC4/XPF, thereby promoting formation of the ERCC4-ERCC1 complex. Relieves NR1D2-mediated inhibition of APOC3 expression by acetylating NR1D2. Acts as a regulator of regulatory T-cells (Treg) by catalyzing FOXP3 acetylation, thereby promoting FOXP3 transcriptional repressor activity. Involved in skeletal myoblast differentiation by mediating acetylation of SOX4. Catalyzes acetylation of APBB1/FE65, increasing its transcription activator activity. Promotes transcription elongation during the activation phase of the circadian cycle by catalyzing acetylation of BMAL1, promoting elongation of circadian transcripts. Together with GSK3 (GSK3A or GSK3B), acts as a regulator of autophagy: phosphorylated at Ser-86 by GSK3 under starvation conditions, leading to activate acetyltransferase activity and promote acetylation of key autophagy regulators, such as ULK1 and RUBCNL/Pacer. Acts as a regulator of the cGAS-STING innate antiviral response by catalyzing acetylation the N-terminus of CGAS, thereby promoting CGAS DNA-binding and activation. Also regulates lipid metabolism by mediating acetylation of CHKA or LPIN1. Promotes lipolysis of lipid droplets following glucose deprivation by mediating acetylation of isoform 1 of CHKA, thereby promoting monomerization of CHKA and its conversion into a tyrosine-protein kinase. Acts as a regulator of fatty-acid-induced triacylglycerol synthesis by catalyzing acetylation of LPIN1, thereby promoting the synthesis of diacylglycerol. In addition to protein acetyltransferase, can use different acyl-CoA substrates, such as (2E)-butenoyl-CoA (crotonyl-CoA), S-lactoyl-CoA (lactyl-CoA) and 2-hydroxyisobutanoyl-CoA (2-hydroxyisobutyryl-CoA), and is able to mediate protein crotonylation, lactylation and 2-hydroxyisobutyrylation, respectively. Acts as a key regulator of chromosome segregation and kinetochore-microtubule attachment during mitosis by mediating acetylation or crotonylation of target proteins. Catalyzes acetylation of AURKB at kinetochores, increasing AURKB activity and promoting accurate chromosome segregation in mitosis. Acetylates RAN during mitosis, promoting microtubule assembly at mitotic chromosomes. Acetylates NDC80/HEC1 during mitosis, promoting robust kinetochore-microtubule attachment. Catalyzes crotonylation of MAPRE1/EB1, thereby ensuring accurate spindle positioning in mitosis. Catalyzes lactylation of NBN/NBS1 in response to DNA damage, thereby promoting DNA double-strand breaks (DSBs) via homologous recombination (HR). The protein is Histone acetyltransferase KAT5 of Mus musculus (Mouse).